Here is a 232-residue protein sequence, read N- to C-terminus: Orotidine 5'-phosphate decarboxylase (232 aa).

Substrate-binding positions include Asp-11, Lys-33, 61-70, Thr-116, Arg-179, Gln-188, Gly-208, and Arg-209; that span reads DMKLFDIGAT. Lys-63 functions as the Proton donor in the catalytic mechanism.

The protein belongs to the OMP decarboxylase family. Type 1 subfamily. Homodimer.

The catalysed reaction is orotidine 5'-phosphate + H(+) = UMP + CO2. It functions in the pathway pyrimidine metabolism; UMP biosynthesis via de novo pathway; UMP from orotate: step 2/2. Catalyzes the decarboxylation of orotidine 5'-monophosphate (OMP) to uridine 5'-monophosphate (UMP). This chain is Orotidine 5'-phosphate decarboxylase, found in Cereibacter sphaeroides (strain ATCC 17023 / DSM 158 / JCM 6121 / CCUG 31486 / LMG 2827 / NBRC 12203 / NCIMB 8253 / ATH 2.4.1.) (Rhodobacter sphaeroides).